The primary structure comprises 644 residues: Arginine--tRNA ligase (644 aa).

Residues 129–139 (ANPIHPLHLGH) carry the 'HIGH' region motif.

The protein belongs to the class-I aminoacyl-tRNA synthetase family.

The protein resides in the cytoplasm. It carries out the reaction tRNA(Arg) + L-arginine + ATP = L-arginyl-tRNA(Arg) + AMP + diphosphate. In Aeropyrum pernix (strain ATCC 700893 / DSM 11879 / JCM 9820 / NBRC 100138 / K1), this protein is Arginine--tRNA ligase (argS).